We begin with the raw amino-acid sequence, 39 residues long: Photosystem II reaction center protein L (39 aa).

A helical membrane pass occupies residues 18–38 (SLYWGLLLIFVLAVLFSNYFF).

This sequence belongs to the PsbL family. In terms of assembly, PSII is composed of 1 copy each of membrane proteins PsbA, PsbB, PsbC, PsbD, PsbE, PsbF, PsbH, PsbI, PsbJ, PsbK, PsbL, PsbM, PsbT, PsbX, PsbY, PsbZ, Psb30/Ycf12, at least 3 peripheral proteins of the oxygen-evolving complex and a large number of cofactors. It forms dimeric complexes.

It localises to the plastid thylakoid membrane. One of the components of the core complex of photosystem II (PSII). PSII is a light-driven water:plastoquinone oxidoreductase that uses light energy to abstract electrons from H(2)O, generating O(2) and a proton gradient subsequently used for ATP formation. It consists of a core antenna complex that captures photons, and an electron transfer chain that converts photonic excitation into a charge separation. This subunit is found at the monomer-monomer interface and is required for correct PSII assembly and/or dimerization. This chain is Photosystem II reaction center protein L, found in Cuscuta gronovii (Common dodder).